The following is a 606-amino-acid chain: Chaperone protein DnaK (606 aa).

Thr174 carries the phosphothreonine; by autocatalysis modification. The interval 576–606 (QAAGSANPGGSQGTSQGNVYEADYKVEDDNK) is disordered. Residues 597–606 (ADYKVEDDNK) show a composition bias toward basic and acidic residues.

This sequence belongs to the heat shock protein 70 family.

Functionally, acts as a chaperone. This chain is Chaperone protein DnaK, found in Caldanaerobacter subterraneus subsp. tengcongensis (strain DSM 15242 / JCM 11007 / NBRC 100824 / MB4) (Thermoanaerobacter tengcongensis).